Here is a 90-residue protein sequence, read N- to C-terminus: uncharacterized protein (90 aa).

An N-terminal signal peptide occupies residues 1-26 (MFESEAELRRIRIALVWIAVFLLFGA).

This is an uncharacterized protein from Bacillus subtilis (strain 168).